The following is a 416-amino-acid chain: Phosphoglycerate kinase (416 aa).

14 residues coordinate (2R)-3-phosphoglycerate: valine 23, aspartate 24, phenylalanine 25, asparagine 26, glutamine 38, arginine 39, serine 62, histidine 63, glycine 65, arginine 66, leucine 121, arginine 122, histidine 168, and arginine 169. Glycine 212 is an ADP binding site. Glycine 212 lines the CDP pocket. AMP is bound by residues alanine 213 and lysine 214. Alanine 213 is a binding site for ATP. Alanine 213 serves as a coordination point for Mg(2+). Mg(2+) is bound by residues alanine 216 and aspartate 217. Aspartate 217 lines the CDP pocket. Lysine 218 is an AMP binding site. Lysine 218 lines the ATP pocket. Glycine 236 contributes to the ADP binding site. Glycine 236 contacts CDP. AMP-binding residues include glycine 237 and glycine 311. The ATP site is built by glycine 237 and glycine 311. CDP contacts are provided by glycine 336 and phenylalanine 341. Phenylalanine 341 lines the ADP pocket. Glutamate 342 serves as a coordination point for AMP. ATP contacts are provided by glutamate 342, aspartate 373, and threonine 374. Aspartate 373 is a Mg(2+) binding site.

The protein belongs to the phosphoglycerate kinase family. As to quaternary structure, monomer. Mg(2+) serves as cofactor.

The protein localises to the cytoplasm. Its subcellular location is the mitochondrion. It catalyses the reaction (2R)-3-phosphoglycerate + ATP = (2R)-3-phospho-glyceroyl phosphate + ADP. It participates in carbohydrate degradation; glycolysis; pyruvate from D-glyceraldehyde 3-phosphate: step 2/5. Its function is as follows. Catalyzes one of the two ATP producing reactions in the glycolytic pathway via the reversible conversion of 1,3-diphosphoglycerate to 3-phosphoglycerate. Both L- and D- forms of purine and pyrimidine nucleotides can be used as substrates, but the activity is much lower on pyrimidines. Negatively regulates the biosynthesis of acetyl-CoA from pyruvate in the mitochondrion. In Kluyveromyces lactis (strain ATCC 8585 / CBS 2359 / DSM 70799 / NBRC 1267 / NRRL Y-1140 / WM37) (Yeast), this protein is Phosphoglycerate kinase (PGK).